Consider the following 268-residue polypeptide: Homeobox protein Hox-C4a (268 aa).

The interval 70–129 (PEPDTQRGHGLPHAGHLLGKGQSASCEPPPLPLSPATPSAASSACNQATPEHPNSSASAK) is disordered. 2 stretches are compositionally biased toward low complexity: residues 77 to 95 (GHGL…SASC) and 105 to 114 (ATPSAASSAC). Residues 115–128 (NQATPEHPNSSASA) show a composition bias toward polar residues. Residues 133-138 (VYPWMK) carry the Antp-type hexapeptide motif. The segment at residues 154–213 (PKRSRTAYTRQQVLELEKEFHYNRYLTRRRRIEIAHSLVLSERQIKIWFQNRRMKWKKDH) is a DNA-binding region (homeobox). The disordered stretch occupies residues 212–268 (DHRLPNTKVRSSSSTGISSGSNTSSAAGVVAAASTTNTMSASEDLSGTERGEDITRL). Positions 222 to 253 (SSSSTGISSGSNTSSAAGVVAAASTTNTMSAS) are enriched in low complexity. Positions 258–268 (GTERGEDITRL) are enriched in basic and acidic residues.

It belongs to the Antp homeobox family. Deformed subfamily.

It localises to the nucleus. Functionally, sequence-specific transcription factor which is part of a developmental regulatory system that provides cells with specific positional identities on the anterior-posterior axis. The protein is Homeobox protein Hox-C4a (hoxc4a) of Danio rerio (Zebrafish).